Here is a 153-residue protein sequence, read N- to C-terminus: ATP synthase subunit b' (153 aa).

A helical membrane pass occupies residues 23–40 (LMAIQVVALTYILNSLFF).

This sequence belongs to the ATPase B chain family. F-type ATPases have 2 components, F(1) - the catalytic core - and F(0) - the membrane proton channel. F(1) has five subunits: alpha(3), beta(3), gamma(1), delta(1), epsilon(1). F(0) has four main subunits: a(1), b(1), b'(1) and c(10-14). The alpha and beta chains form an alternating ring which encloses part of the gamma chain. F(1) is attached to F(0) by a central stalk formed by the gamma and epsilon chains, while a peripheral stalk is formed by the delta, b and b' chains.

The protein resides in the cellular thylakoid membrane. Functionally, f(1)F(0) ATP synthase produces ATP from ADP in the presence of a proton or sodium gradient. F-type ATPases consist of two structural domains, F(1) containing the extramembraneous catalytic core and F(0) containing the membrane proton channel, linked together by a central stalk and a peripheral stalk. During catalysis, ATP synthesis in the catalytic domain of F(1) is coupled via a rotary mechanism of the central stalk subunits to proton translocation. Component of the F(0) channel, it forms part of the peripheral stalk, linking F(1) to F(0). The b'-subunit is a diverged and duplicated form of b found in plants and photosynthetic bacteria. The polypeptide is ATP synthase subunit b' (Prochlorococcus marinus (strain MIT 9301)).